The sequence spans 141 residues: Nucleoside triphosphatase NudI (141 aa).

The Nudix hydrolase domain occupies 1 to 141 (MRQRTIVCPL…RKTLSLKGLL (141 aa)). Positions 38 to 59 (GGVEPGERIEDALRREIREELG) match the Nudix box motif.

The protein belongs to the Nudix hydrolase family. NudI subfamily. As to quaternary structure, monomer. Mg(2+) serves as cofactor.

It carries out the reaction a ribonucleoside 5'-triphosphate + H2O = a ribonucleoside 5'-phosphate + diphosphate + H(+). The catalysed reaction is a 2'-deoxyribonucleoside 5'-triphosphate + H2O = a 2'-deoxyribonucleoside 5'-phosphate + diphosphate + H(+). The enzyme catalyses dUTP + H2O = dUMP + diphosphate + H(+). It catalyses the reaction dTTP + H2O = dTMP + diphosphate + H(+). It carries out the reaction dCTP + H2O = dCMP + diphosphate + H(+). Catalyzes the hydrolysis of nucleoside triphosphates, with a preference for pyrimidine deoxynucleoside triphosphates (dUTP, dTTP and dCTP). The chain is Nucleoside triphosphatase NudI from Escherichia fergusonii (strain ATCC 35469 / DSM 13698 / CCUG 18766 / IAM 14443 / JCM 21226 / LMG 7866 / NBRC 102419 / NCTC 12128 / CDC 0568-73).